We begin with the raw amino-acid sequence, 235 residues long: DUP240 protein DFP4 (235 aa).

Residues 1–44 (MSSELLISNSKPRPEGLRKLCEGETVILPRDITPSKCAYFLKQN) lie on the Cytoplasmic side of the membrane. Residues 45–65 (IVFISYIFIHIIITIILNRLA) traverse the membrane as a helical segment. Topologically, residues 66 to 72 (LSAHGNT) are extracellular. A helical membrane pass occupies residues 73–93 (LIIILAALLITISLFLLLLLP). The Cytoplasmic portion of the chain corresponds to 94-235 (YLSCSRYKLR…DKYPEMGVTV (142 aa)).

Belongs to the DUP/COS family. In terms of assembly, interacts according to large scale protein interaction studies with BZZ1, SRB4 and SUA7.

Its subcellular location is the cell membrane. This chain is DUP240 protein DFP4, found in Saccharomyces cerevisiae (strain ATCC 204508 / S288c) (Baker's yeast).